The primary structure comprises 301 residues: Probable 5-dehydro-4-deoxyglucarate dehydratase (301 aa).

Belongs to the DapA family.

It carries out the reaction 5-dehydro-4-deoxy-D-glucarate + H(+) = 2,5-dioxopentanoate + CO2 + H2O. Its pathway is carbohydrate acid metabolism; D-glucarate degradation; 2,5-dioxopentanoate from D-glucarate: step 2/2. The polypeptide is Probable 5-dehydro-4-deoxyglucarate dehydratase (Cereibacter sphaeroides (strain ATCC 17023 / DSM 158 / JCM 6121 / CCUG 31486 / LMG 2827 / NBRC 12203 / NCIMB 8253 / ATH 2.4.1.) (Rhodobacter sphaeroides)).